A 202-amino-acid polypeptide reads, in one-letter code: Peptidyl-tRNA hydrolase (202 aa).

Tyrosine 19 lines the tRNA pocket. Histidine 24 serves as the catalytic Proton acceptor. TRNA-binding residues include tyrosine 70, asparagine 72, and asparagine 118.

The protein belongs to the PTH family. As to quaternary structure, monomer.

It localises to the cytoplasm. It catalyses the reaction an N-acyl-L-alpha-aminoacyl-tRNA + H2O = an N-acyl-L-amino acid + a tRNA + H(+). Functionally, hydrolyzes ribosome-free peptidyl-tRNAs (with 1 or more amino acids incorporated), which drop off the ribosome during protein synthesis, or as a result of ribosome stalling. Catalyzes the release of premature peptidyl moieties from peptidyl-tRNA molecules trapped in stalled 50S ribosomal subunits, and thus maintains levels of free tRNAs and 50S ribosomes. The protein is Peptidyl-tRNA hydrolase of Prochlorococcus marinus (strain NATL1A).